Reading from the N-terminus, the 354-residue chain is E2F transcription factor-like E2FF (354 aa).

A DNA-binding region spans residues 21-86; it reads RKEKSLGVLV…RGKNQYSWKG (66 aa). Residues 104–143 are disordered; sequence ERLGYSSSNNSDKVSNGCEREEPLTLTPDDQENSSSSKMD. Over residues 108-117 the composition is skewed to polar residues; it reads YSSSNNSDKV. Residues 145 to 225 mediate DNA binding; the sequence is KKEKSLWLLA…TRKPAYRWLG (81 aa).

Belongs to the E2F/DP family. In terms of tissue distribution, high expression in young cotyledons and leaves, hypocotyls, shoot apical meristem, roots and mature pollen grains, moderate in developing trichomes, flowers and at early stages of developing anthers, and barely detectable in mature leaves. Not detected in primary root meristem, emerging lateral roots, pistils, developing embryos and siliques.

Its subcellular location is the nucleus. It is found in the cytoplasm. Functionally, inhibitor of E2F-dependent activation of gene expression. Binds specifically the E2 recognition site without interacting with DP proteins and prevents transcription activation by E2F/DP heterodimers. Does not bind retinoblastoma-related proteins. Acts as a growth regulator but is not associated with changes in the expression of cell cycle marker genes or in nuclear ploidy levels. Has no effect on cell proliferation, but may repress cell wall biosynthesis genes during cell elongation in differentiated cells. In Arabidopsis thaliana (Mouse-ear cress), this protein is E2F transcription factor-like E2FF (E2FF).